Here is a 280-residue protein sequence, read N- to C-terminus: Thioesterase pynI (280 aa).

Residues 136 to 145 are compositionally biased toward acidic residues; that stretch reads LADDSDDEDN. The disordered stretch occupies residues 136–167; it reads LADDSDDEDNRSDASDASDDGSTMSDEEEEDD.

This sequence belongs to the AMT4 thioesterase family.

The protein operates within secondary metabolite biosynthesis. Its function is as follows. Thioesterase; part of the gene cluster that mediates the biosynthesis of pyranonigrins, a family of antioxidative compounds. The first step of pyranonigrins biosynthesis is performed by the hybrid PKS-NRPS synthetase that condenses 6 malonyl-CoA units to an acetyl starter unit, to form a 1,3,5-trioxotetradecane-6,8-dienyl-ACP. The enoyl reductase (ER) domain of pynA is likely to be functional during the first two rounds of polyketide chain extension, to generate the saturated C-C bonds of the alkyl side chain. PynA subsequently forms the amide bond between the acyl chain and L-serine. Although pynA has a terminal reductase domain, it appears to require the thioesterase pynI for the release of the straight-chain intermediate from pynA via the formation of a tetramic acid pyranonigrin J. The methyltransferase pynC then coverts pyranonigrin J to pyranonigrin I via N-methylation. The FAD-dependent monooxygenase pynG catalyzes an epoxidation-mediated cyclization to form the dihydro-gamma-pyrone moiety, followed by pynD-catalyzed oxidation of the alcohol to the ketone and enolization to yield the characteristic tetramic acid-fused gamma-pyrone core of pyranonigrin H. Pyranonigrin H is substrate of pynH for dehydration-mediated exo-methylene formation from the serine side chain to produce pyranonigrin E, before the oxidase pynE reduces the exo-methylene of pyranonigrin E into a pendant methyl to form pyranonigrin G. The FAD-linked oxidoreductase pynB performs the reverse reaction and converts pyranonigrin G back to pyranonigrin E. The polypeptide is Thioesterase pynI (Aspergillus niger (strain ATCC MYA-4892 / CBS 513.88 / FGSC A1513)).